Consider the following 384-residue polypeptide: Lipid-A-disaccharide synthase (384 aa).

Belongs to the LpxB family.

It catalyses the reaction a lipid X + a UDP-2-N,3-O-bis[(3R)-3-hydroxyacyl]-alpha-D-glucosamine = a lipid A disaccharide + UDP + H(+). Its pathway is bacterial outer membrane biogenesis; LPS lipid A biosynthesis. Its function is as follows. Condensation of UDP-2,3-diacylglucosamine and 2,3-diacylglucosamine-1-phosphate to form lipid A disaccharide, a precursor of lipid A, a phosphorylated glycolipid that anchors the lipopolysaccharide to the outer membrane of the cell. In Neisseria meningitidis serogroup C / serotype 2a (strain ATCC 700532 / DSM 15464 / FAM18), this protein is Lipid-A-disaccharide synthase.